We begin with the raw amino-acid sequence, 242 residues long: Small ribosomal subunit protein uS2 (242 aa).

It belongs to the universal ribosomal protein uS2 family.

This Shewanella woodyi (strain ATCC 51908 / MS32) protein is Small ribosomal subunit protein uS2.